Consider the following 221-residue polypeptide: 7-cyano-7-deazaguanine synthase (221 aa).

7 to 17 (LSGGMDSTTLL) is a binding site for ATP. Residues C183, C191, C194, and C197 each contribute to the Zn(2+) site.

Belongs to the QueC family. As to quaternary structure, homodimer. The cofactor is Zn(2+).

The catalysed reaction is 7-carboxy-7-deazaguanine + NH4(+) + ATP = 7-cyano-7-deazaguanine + ADP + phosphate + H2O + H(+). It functions in the pathway purine metabolism; 7-cyano-7-deazaguanine biosynthesis. In terms of biological role, catalyzes the ATP-dependent conversion of 7-carboxy-7-deazaguanine (CDG) to 7-cyano-7-deazaguanine (preQ(0)). This chain is 7-cyano-7-deazaguanine synthase, found in Caldicellulosiruptor bescii (strain ATCC BAA-1888 / DSM 6725 / KCTC 15123 / Z-1320) (Anaerocellum thermophilum).